The primary structure comprises 106 residues: Iron-sulfur cluster assembly protein CyaY (106 aa).

This sequence belongs to the frataxin family.

Functionally, involved in iron-sulfur (Fe-S) cluster assembly. May act as a regulator of Fe-S biogenesis. The sequence is that of Iron-sulfur cluster assembly protein CyaY from Citrobacter koseri (strain ATCC BAA-895 / CDC 4225-83 / SGSC4696).